A 787-amino-acid chain; its full sequence is Transcription factor SOX-6 (787 aa).

The tract at residues 1 to 46 is disordered; that stretch reads MSSKQATSPFACAADGEDAMTQDLTSREKEEGSDQHVASHLPLHPI. The span at 25 to 34 shows a compositional bias: basic and acidic residues; that stretch reads TSREKEEGSD. Threonine 119 carries the phosphothreonine modification. Residues 184-262 are a coiled coil; sequence LAEKERQLST…LLQQQIQVQG (79 aa). The interval 340–429 is disordered; the sequence is PGAKMPSTPQ…KSSIPSPIGG (90 aa). Residues 352-361 show a composition bias toward polar residues; it reads NTAGTVSPTG. A Phosphoserine modification is found at serine 358. Threonine 360 is subject to Phosphothreonine. Residues lysine 363 and lysine 376 each participate in a glycyl lysine isopeptide (Lys-Gly) (interchain with G-Cter in SUMO) cross-link. 2 positions are modified to phosphoserine: serine 398 and serine 401. Positions 398-420 are enriched in polar residues; the sequence is SPTSPTQNLFPASKTSPVNLPNK. Residues 580–648 constitute a DNA-binding region (HMG box); that stretch reads IKRPMNAFMV…IHLEKYPNYK (69 aa). The segment covering 712 to 740 has biased composition (polar residues); it reads TPSPQMTSDCSSTSASPEPSLPVIQSTYG. A disordered region spans residues 712 to 787; the sequence is TPSPQMTSDC…NEAPEAVSAN (76 aa). The span at 755 to 768 shows a compositional bias: acidic residues; the sequence is NGEDEMEMYDDYED.

In terms of assembly, homodimer. Interacts with DAZAP2. May interact with CENPK. In terms of processing, sumoylation inhibits the transcriptional activity.

It localises to the nucleus. Its subcellular location is the cytoplasm. In terms of biological role, transcription factor that plays a key role in several developmental processes, including neurogenesis, chondrocytes differentiation and cartilage formation. Specifically binds the 5'-AACAAT-3' DNA motif present in enhancers and super-enhancers and promotes expression of genes important for chondrogenesis. Required for overt chondrogenesis when condensed prechondrocytes differentiate into early stage chondrocytes: SOX5 and SOX6 cooperatively bind with SOX9 on active enhancers and super-enhancers associated with cartilage-specific genes, and thereby potentiate SOX9's ability to transactivate. Not involved in precartilaginous condensation, the first step in chondrogenesis, during which skeletal progenitors differentiate into prechondrocytes. Together with SOX5, required to form and maintain a pool of highly proliferating chondroblasts between epiphyses and metaphyses, to form columnar chondroblasts, delay chondrocyte prehypertrophy but promote hypertrophy, and to delay terminal differentiation of chondrocytes on contact with ossification fronts. Binds to the proximal promoter region of the myelin protein MPZ gene, and is thereby involved in the differentiation of oligodendroglia in the developing spinal tube. Binds to the gene promoter of MBP and acts as a transcriptional repressor. The polypeptide is Transcription factor SOX-6 (Pongo abelii (Sumatran orangutan)).